Reading from the N-terminus, the 156-residue chain is Small ribosomal subunit protein uS7 (156 aa).

Belongs to the universal ribosomal protein uS7 family. As to quaternary structure, part of the 30S ribosomal subunit. Contacts proteins S9 and S11.

Its function is as follows. One of the primary rRNA binding proteins, it binds directly to 16S rRNA where it nucleates assembly of the head domain of the 30S subunit. Is located at the subunit interface close to the decoding center, probably blocks exit of the E-site tRNA. The protein is Small ribosomal subunit protein uS7 of Limosilactobacillus fermentum (strain NBRC 3956 / LMG 18251) (Lactobacillus fermentum).